Reading from the N-terminus, the 76-residue chain is Serine proteinase inhibitor IA-1 (76 aa).

Residue Ser-1 is modified to N-acetylserine.

It belongs to the protease inhibitor I9 family.

Specifically inhibits an endogenous intracellular serine proteinase (proteinase A). In Pleurotus ostreatus (Oyster mushroom), this protein is Serine proteinase inhibitor IA-1.